Reading from the N-terminus, the 521-residue chain is Bifunctional purine biosynthesis protein PurH (521 aa).

The MGS-like domain maps to 1 to 145; sequence MIKQALISVS…KNHRDVTVVV (145 aa).

The protein belongs to the PurH family.

The enzyme catalyses (6R)-10-formyltetrahydrofolate + 5-amino-1-(5-phospho-beta-D-ribosyl)imidazole-4-carboxamide = 5-formamido-1-(5-phospho-D-ribosyl)imidazole-4-carboxamide + (6S)-5,6,7,8-tetrahydrofolate. The catalysed reaction is IMP + H2O = 5-formamido-1-(5-phospho-D-ribosyl)imidazole-4-carboxamide. Its pathway is purine metabolism; IMP biosynthesis via de novo pathway; 5-formamido-1-(5-phospho-D-ribosyl)imidazole-4-carboxamide from 5-amino-1-(5-phospho-D-ribosyl)imidazole-4-carboxamide (10-formyl THF route): step 1/1. It participates in purine metabolism; IMP biosynthesis via de novo pathway; IMP from 5-formamido-1-(5-phospho-D-ribosyl)imidazole-4-carboxamide: step 1/1. The protein is Bifunctional purine biosynthesis protein PurH of Burkholderia pseudomallei (strain 1106a).